We begin with the raw amino-acid sequence, 1342 residues long: DNA-directed RNA polymerase subunit beta (1342 aa).

Belongs to the RNA polymerase beta chain family. As to quaternary structure, the RNAP catalytic core consists of 2 alpha, 1 beta, 1 beta' and 1 omega subunit. When a sigma factor is associated with the core the holoenzyme is formed, which can initiate transcription.

It carries out the reaction RNA(n) + a ribonucleoside 5'-triphosphate = RNA(n+1) + diphosphate. In terms of biological role, DNA-dependent RNA polymerase catalyzes the transcription of DNA into RNA using the four ribonucleoside triphosphates as substrates. The chain is DNA-directed RNA polymerase subunit beta from Photorhabdus laumondii subsp. laumondii (strain DSM 15139 / CIP 105565 / TT01) (Photorhabdus luminescens subsp. laumondii).